The following is a 913-amino-acid chain: Alanine--tRNA ligase (913 aa).

Positions 608, 612, 711, and 715 each coordinate Zn(2+).

Belongs to the class-II aminoacyl-tRNA synthetase family. It depends on Zn(2+) as a cofactor.

It is found in the cytoplasm. It carries out the reaction tRNA(Ala) + L-alanine + ATP = L-alanyl-tRNA(Ala) + AMP + diphosphate. Catalyzes the attachment of alanine to tRNA(Ala) in a two-step reaction: alanine is first activated by ATP to form Ala-AMP and then transferred to the acceptor end of tRNA(Ala). Also edits incorrectly charged Ser-tRNA(Ala) and Gly-tRNA(Ala) via its editing domain. The protein is Alanine--tRNA ligase of Methanocorpusculum labreanum (strain ATCC 43576 / DSM 4855 / Z).